The sequence spans 386 residues: S-adenosylmethionine synthase (386 aa).

Residue histidine 16 coordinates ATP. Residue aspartate 18 participates in Mg(2+) binding. Residue glutamate 44 coordinates K(+). L-methionine-binding residues include glutamate 57 and glutamine 100. Residues 100–110 (QSRDIAQGVDR) form a flexible loop region. Residues 165 to 167 (DAK), aspartate 240, 246 to 247 (RK), alanine 263, and lysine 267 contribute to the ATP site. An L-methionine-binding site is contributed by aspartate 240. Residue lysine 271 participates in L-methionine binding.

Belongs to the AdoMet synthase family. As to quaternary structure, homotetramer; dimer of dimers. Mg(2+) is required as a cofactor. The cofactor is K(+).

It is found in the cytoplasm. It carries out the reaction L-methionine + ATP + H2O = S-adenosyl-L-methionine + phosphate + diphosphate. It functions in the pathway amino-acid biosynthesis; S-adenosyl-L-methionine biosynthesis; S-adenosyl-L-methionine from L-methionine: step 1/1. Functionally, catalyzes the formation of S-adenosylmethionine (AdoMet) from methionine and ATP. The overall synthetic reaction is composed of two sequential steps, AdoMet formation and the subsequent tripolyphosphate hydrolysis which occurs prior to release of AdoMet from the enzyme. The polypeptide is S-adenosylmethionine synthase (Francisella tularensis subsp. holarctica (strain FTNF002-00 / FTA)).